A 339-amino-acid polypeptide reads, in one-letter code: Mycothiol acetyltransferase (339 aa).

N-acetyltransferase domains follow at residues Y8–T174 and L176–N339. E39 serves as a coordination point for 1D-myo-inositol 2-(L-cysteinylamino)-2-deoxy-alpha-D-glucopyranoside. L85–V87 is an acetyl-CoA binding site. Positions 207, 254, and 270 each coordinate 1D-myo-inositol 2-(L-cysteinylamino)-2-deoxy-alpha-D-glucopyranoside. Acetyl-CoA is bound at residue V274 to L276. Position 308 (Y308) interacts with 1D-myo-inositol 2-(L-cysteinylamino)-2-deoxy-alpha-D-glucopyranoside.

It belongs to the acetyltransferase family. MshD subfamily. Monomer.

The enzyme catalyses 1D-myo-inositol 2-(L-cysteinylamino)-2-deoxy-alpha-D-glucopyranoside + acetyl-CoA = mycothiol + CoA + H(+). In terms of biological role, catalyzes the transfer of acetyl from acetyl-CoA to desacetylmycothiol (Cys-GlcN-Ins) to form mycothiol. The sequence is that of Mycothiol acetyltransferase from Corynebacterium urealyticum (strain ATCC 43042 / DSM 7109).